A 534-amino-acid chain; its full sequence is Major facilitator-type transporter sor6 (534 aa).

Residues Asn-29 and Asn-36 are each glycosylated (N-linked (GlcNAc...) asparagine). A run of 12 helical transmembrane segments spans residues 66–86 (WFLT…SSAY), 103–123 (LFIT…AVWG), 160–180 (AMVA…LIVL), 182–202 (FLAG…IADL), 209–229 (GLAM…GPIV), 241–261 (WVQG…VIFV), 318–338 (IVLI…MFLG), 354–374 (FGGL…GYAI), 395–415 (LPPA…FAWT), 424–444 (VSIV…LPIV), 456–476 (ASVL…FPLF), and 486–506 (IHWA…FPFF).

Belongs to the major facilitator superfamily. Sugar transporter (TC 2.A.1.1) family.

The protein localises to the membrane. In terms of biological role, major facilitator-type transporter; part of the gene cluster that mediates the biosynthesis of sorbicillinoids, a diverse group of yellow secondary metabolites that restrict growth of competing pathogenic fungi but not of bacteria. The polypeptide is Major facilitator-type transporter sor6 (Hypocrea jecorina (strain QM6a) (Trichoderma reesei)).